The chain runs to 360 residues: MKTATAVINRRALRHNLQRIRQLAPGSQIVAVVKANAYGHGMIESAHTFCDADCYGVARLSEALALRAAGITKPIVLLEGFFSADDLPLLVEHQLETAVHSLEQLAALEQATLPQPIRVWMKLDTGMHRLGVLPEHADAFWQRLTECRNVVQPVNIMSHFCRADEPEAGTTERQLACFDAFTQGKPGAQSIAASGGILLWPQAHRDRVRPGIILYGVSPLDNEDAAHFGFQPAMTFTSHLIAVREHKAGETVGYGGTWTSPRDTRLGVVAVGYGDGYPRCAPAGTPVLINGREVPLSGRVSMDMITVDLGPDAQDKVGDEVILWGPTLSVERIAAHTGASAYELITRLTQRTALEYVDGE.

Catalysis depends on Lys34, which acts as the Proton acceptor; specific for D-alanine. Residue Lys34 is modified to N6-(pyridoxal phosphate)lysine. Arg129 lines the substrate pocket. Tyr254 serves as the catalytic Proton acceptor; specific for L-alanine. Position 302 (Met302) interacts with substrate.

It belongs to the alanine racemase family. Pyridoxal 5'-phosphate is required as a cofactor.

The enzyme catalyses L-alanine = D-alanine. The protein operates within amino-acid biosynthesis; D-alanine biosynthesis; D-alanine from L-alanine: step 1/1. Catalyzes the interconversion of L-alanine and D-alanine. May also act on other amino acids. The protein is Alanine racemase (alr) of Pectobacterium atrosepticum (strain SCRI 1043 / ATCC BAA-672) (Erwinia carotovora subsp. atroseptica).